A 467-amino-acid polypeptide reads, in one-letter code: Squalene synthase (467 aa).

It belongs to the phytoene/squalene synthase family. The cofactor is Mg(2+).

The enzyme catalyses 2 (2E,6E)-farnesyl diphosphate + NADPH + H(+) = squalene + 2 diphosphate + NADP(+). It carries out the reaction 2 (2E,6E)-farnesyl diphosphate + NADH + H(+) = squalene + 2 diphosphate + NAD(+). Its pathway is terpene metabolism; lanosterol biosynthesis; lanosterol from farnesyl diphosphate: step 1/3. In terms of biological role, squalene synthase; part of the third module of ergosterol biosynthesis pathway that includes the late steps of the pathway. The third module or late pathway involves the ergosterol synthesis itself through consecutive reactions that mainly occur in the endoplasmic reticulum (ER) membrane. Firstly, the squalene synthase SQS catalyzes the condensation of 2 farnesyl pyrophosphate moieties to form squalene, which is the precursor of all steroids. Secondly, the squalene epoxidase catalyzes the stereospecific oxidation of squalene to (S)-2,3-epoxysqualene, which is considered to be a rate-limiting enzyme in steroid biosynthesis. Then, the lanosterol synthase LS catalyzes the cyclization of (S)-2,3 oxidosqualene to lanosterol, a reaction that forms the sterol core. In the next steps, lanosterol is transformed to ergosterol via a complex process involving various demethylation, reduction and desaturation reactions. Lanosterol is also an intermediate in the biosynthesis of triterpenes such as ganoderic acids (GA), a group of highly oxygenated lanostane-type triterpenoids which are well recognized as a main group of unique bioactive compounds in the medicinal mushroom Ganoderma lucidum. The protein is Squalene synthase of Ganoderma lucidum (Ling zhi medicinal fungus).